Here is a 177-residue protein sequence, read N- to C-terminus: Shikimate kinase (177 aa).

17–22 (GAGKST) provides a ligand contact to ATP. Residue serine 21 coordinates Mg(2+). Positions 39, 63, and 85 each coordinate substrate. Position 123 (arginine 123) interacts with ATP. Arginine 142 is a binding site for substrate. Arginine 160 contributes to the ATP binding site.

Belongs to the shikimate kinase family. In terms of assembly, monomer. The cofactor is Mg(2+).

The protein resides in the cytoplasm. It carries out the reaction shikimate + ATP = 3-phosphoshikimate + ADP + H(+). Its pathway is metabolic intermediate biosynthesis; chorismate biosynthesis; chorismate from D-erythrose 4-phosphate and phosphoenolpyruvate: step 5/7. Its function is as follows. Catalyzes the specific phosphorylation of the 3-hydroxyl group of shikimic acid using ATP as a cosubstrate. The polypeptide is Shikimate kinase (Halorhodospira halophila (strain DSM 244 / SL1) (Ectothiorhodospira halophila (strain DSM 244 / SL1))).